Reading from the N-terminus, the 239-residue chain is Phosducin-like protein 3 (239 aa).

N-acetylmethionine is present on Met1. The Phosducin domain maps to 32–180 (EAEEEQRILQ…EGDIKAQFIG (149 aa)). Position 43 is a phosphoserine (Ser43). The interval 91 to 239 (FGEVLEISGK…MKRDSDSEGD (149 aa)) is thioredoxin fold. Interaction with XIAP regions lie at residues 97 to 99 (ISG) and 153 to 155 (TCI). Phosphoserine occurs at positions 234 and 236.

The protein belongs to the phosducin family. Interacts (via thioredoxin fold region) with KDR/VEGFR2 (via juxtamembrane domain). Forms ternary complexes with the chaperonin CCT complex and actin substrate, leading to inhibition of actin folding. Interacts with XIAP (via BIR 3 and RING domain). Interacts with HSP90AA1 and HSP90AB1. In terms of processing, N-terminal methionine acetylation destabilizes the protein. In terms of tissue distribution, expressed in endothelial cells (at protein level). Expressed in all tissues examined including spleen, thymus, prostate, testis, ovary, small intestine and colon.

The protein resides in the cytoplasm. It is found in the perinuclear region. It localises to the endoplasmic reticulum. In terms of biological role, acts as a chaperone for the angiogenic VEGF receptor KDR/VEGFR2, increasing its abundance by inhibiting its ubiquitination and degradation. Inhibits the folding activity of the chaperonin-containing T-complex (CCT) which leads to inhibition of cytoskeletal actin folding. Acts as a chaperone during heat shock alongside HSP90 and HSP40/70 chaperone complexes. Modulates the activation of caspases during apoptosis. This chain is Phosducin-like protein 3 (PDCL3), found in Homo sapiens (Human).